The sequence spans 278 residues: PILR alpha-associated neural protein (278 aa).

Residues 1-27 (MWSAQLLSQLLPLWPLLLLSVLPPAQG) form the signal peptide. Residues 25 to 93 (AQGSSHRSPP…PSGFEEGPPS (69 aa)) are disordered. At 28–174 (SSHRSPPAPA…FGGRGEGVDP (147 aa)) the chain is on the extracellular side. O-linked (GalNAc...) threonine glycosylation is present at Thr-136. Residues 175–195 (QLYVTITISIIIVLVATGIIF) form a helical membrane-spanning segment. Over 196 to 278 (KFCWDRSQKR…QLNRIPLVNL (83 aa)) the chain is Cytoplasmic. The disordered stretch occupies residues 206 to 278 (RRPSGQQGAL…QLNRIPLVNL (73 aa)). A compositionally biased stretch (polar residues) spans 209–225 (SGQQGALRQEESQQPLT).

In terms of processing, O-glycosylation at Thr-136 is essential for recognition by PILRA. In terms of tissue distribution, mainly expressed in brain and spinal cord. Weak expression also detected in heart, kidney, spleen and lymph node. Virtually no expression detected in liver and embryo relative to brain.

The protein localises to the membrane. Acts as a ligand for PILRA in neuronal tissues, where it may be involved in immune regulation. The chain is PILR alpha-associated neural protein (Pianp) from Mus musculus (Mouse).